Consider the following 360-residue polypeptide: UDP-N-acetylglucosamine--N-acetylmuramyl-(pentapeptide) pyrophosphoryl-undecaprenol N-acetylglucosamine transferase (360 aa).

Residues 14 to 16 (TGG), asparagine 131, arginine 167, serine 195, isoleucine 249, and glutamine 294 each bind UDP-N-acetyl-alpha-D-glucosamine.

This sequence belongs to the glycosyltransferase 28 family. MurG subfamily.

It is found in the cell inner membrane. The enzyme catalyses di-trans,octa-cis-undecaprenyl diphospho-N-acetyl-alpha-D-muramoyl-L-alanyl-D-glutamyl-meso-2,6-diaminopimeloyl-D-alanyl-D-alanine + UDP-N-acetyl-alpha-D-glucosamine = di-trans,octa-cis-undecaprenyl diphospho-[N-acetyl-alpha-D-glucosaminyl-(1-&gt;4)]-N-acetyl-alpha-D-muramoyl-L-alanyl-D-glutamyl-meso-2,6-diaminopimeloyl-D-alanyl-D-alanine + UDP + H(+). It functions in the pathway cell wall biogenesis; peptidoglycan biosynthesis. In terms of biological role, cell wall formation. Catalyzes the transfer of a GlcNAc subunit on undecaprenyl-pyrophosphoryl-MurNAc-pentapeptide (lipid intermediate I) to form undecaprenyl-pyrophosphoryl-MurNAc-(pentapeptide)GlcNAc (lipid intermediate II). In Polaromonas naphthalenivorans (strain CJ2), this protein is UDP-N-acetylglucosamine--N-acetylmuramyl-(pentapeptide) pyrophosphoryl-undecaprenol N-acetylglucosamine transferase.